The sequence spans 705 residues: Polyribonucleotide nucleotidyltransferase (705 aa).

Mg(2+)-binding residues include aspartate 486 and aspartate 492. Positions proline 553–isoleucine 612 constitute a KH domain. The region spanning glycine 622 to lysine 690 is the S1 motif domain.

Belongs to the polyribonucleotide nucleotidyltransferase family. In terms of assembly, component of the RNA degradosome, which is a multiprotein complex involved in RNA processing and mRNA degradation. It depends on Mg(2+) as a cofactor.

The protein resides in the cytoplasm. It catalyses the reaction RNA(n+1) + phosphate = RNA(n) + a ribonucleoside 5'-diphosphate. Functionally, involved in mRNA degradation. Catalyzes the phosphorolysis of single-stranded polyribonucleotides processively in the 3'- to 5'-direction. This is Polyribonucleotide nucleotidyltransferase from Yersinia pseudotuberculosis serotype O:3 (strain YPIII).